We begin with the raw amino-acid sequence, 283 residues long: MGAAGLLEIKKRIKSVENTRKITNAMGLVATSKLRKTKNELAVNNKFIDITEPVVRNLATTAGEEGSNVYFEGNDSQNKLYVVITSDSGLCGGFNSSVVSQLVSQIKDKKDTAKIVLVGSKGLGYLKRIKIEPVGEYVGIEDVPTVSEAKEIFDKALEMYLNGDVSEVNIVYSDFISSVKQETKSVKILPISKSEGTTGSFLIEPDLDIVLEDALNIYLKGKIRSILLSSKCSEQSTRMTAMDGATKNADDLLDKLKLKFNRIRQGAITQEISEIVGGAAAQN.

It belongs to the ATPase gamma chain family. As to quaternary structure, F-type ATPases have 2 components, CF(1) - the catalytic core - and CF(0) - the membrane proton channel. CF(1) has five subunits: alpha(3), beta(3), gamma(1), delta(1), epsilon(1). CF(0) has three main subunits: a, b and c.

Its subcellular location is the cell membrane. In terms of biological role, produces ATP from ADP in the presence of a proton gradient across the membrane. The gamma chain is believed to be important in regulating ATPase activity and the flow of protons through the CF(0) complex. The protein is ATP synthase gamma chain of Clostridium beijerinckii (strain ATCC 51743 / NCIMB 8052) (Clostridium acetobutylicum).